The following is a 222-amino-acid chain: Putative hemin import ATP-binding protein HrtA (222 aa).

Residues 3–222 (LQVKDIKKSF…ELDDGVITNA (220 aa)) form the ABC transporter domain. 39 to 46 (GASGSGKT) contacts ATP.

This sequence belongs to the ABC transporter superfamily. HrtA family. The complex is composed of two ATP-binding proteins (HrtA), two transmembrane proteins (HrtB) and a solute-binding protein.

It localises to the cell membrane. Its function is as follows. Part of the ABC transporter complex hrt involved in hemin import. Responsible for energy coupling to the transport system. This is Putative hemin import ATP-binding protein HrtA (hrtA) from Staphylococcus saprophyticus subsp. saprophyticus (strain ATCC 15305 / DSM 20229 / NCIMB 8711 / NCTC 7292 / S-41).